The sequence spans 261 residues: Ribonuclease HII (261 aa).

One can recognise an RNase H type-2 domain in the interval 72-260 (AVICGIDEVG…IKSIVLEKLD (189 aa)). Asp78, Glu79, and Asp170 together coordinate a divalent metal cation.

This sequence belongs to the RNase HII family. It depends on Mn(2+) as a cofactor. Mg(2+) serves as cofactor.

It localises to the cytoplasm. The enzyme catalyses Endonucleolytic cleavage to 5'-phosphomonoester.. Endonuclease that specifically degrades the RNA of RNA-DNA hybrids. In Staphylococcus carnosus (strain TM300), this protein is Ribonuclease HII.